A 62-amino-acid polypeptide reads, in one-letter code: uncharacterized protein (62 aa).

The protein localises to the plastid. It localises to the chloroplast. This is an uncharacterized protein from Chlamydomonas reinhardtii (Chlamydomonas smithii).